Reading from the N-terminus, the 86-residue chain is Large ribosomal subunit protein bL27 (86 aa).

The segment at 1-31 is disordered; it reads MAHKKAGGSSRNGRDSAGQRRGVKKFGGEPV.

This sequence belongs to the bacterial ribosomal protein bL27 family.

This Desulfotalea psychrophila (strain LSv54 / DSM 12343) protein is Large ribosomal subunit protein bL27.